Reading from the N-terminus, the 671-residue chain is DNA ligase (671 aa).

Residues 32–36, 81–82, and Glu113 contribute to the NAD(+) site; these read DAEYD and SL. Lys115 (N6-AMP-lysine intermediate) is an active-site residue. Positions 136, 173, 290, and 314 each coordinate NAD(+). Zn(2+) contacts are provided by Cys408, Cys411, Cys426, and Cys432. The BRCT domain maps to 593–671; sequence EIDSPFAGKT…EAEMIRLLDA (79 aa).

Belongs to the NAD-dependent DNA ligase family. LigA subfamily. The cofactor is Mg(2+). Mn(2+) serves as cofactor.

It catalyses the reaction NAD(+) + (deoxyribonucleotide)n-3'-hydroxyl + 5'-phospho-(deoxyribonucleotide)m = (deoxyribonucleotide)n+m + AMP + beta-nicotinamide D-nucleotide.. In terms of biological role, DNA ligase that catalyzes the formation of phosphodiester linkages between 5'-phosphoryl and 3'-hydroxyl groups in double-stranded DNA using NAD as a coenzyme and as the energy source for the reaction. It is essential for DNA replication and repair of damaged DNA. In Salmonella schwarzengrund (strain CVM19633), this protein is DNA ligase.